The sequence spans 240 residues: Large ribosomal subunit protein bL25 (240 aa).

The disordered stretch occupies residues 1–24 (MATVMEFKATARPKSGKGAARAER).

The protein belongs to the bacterial ribosomal protein bL25 family. CTC subfamily. As to quaternary structure, part of the 50S ribosomal subunit; part of the 5S rRNA/L5/L18/L25 subcomplex. Contacts the 5S rRNA. Binds to the 5S rRNA independently of L5 and L18.

Functionally, this is one of the proteins that binds to the 5S RNA in the ribosome where it forms part of the central protuberance. The polypeptide is Large ribosomal subunit protein bL25 (Rhodopseudomonas palustris (strain HaA2)).